The primary structure comprises 372 residues: UDP-N-acetylglucosamine--N-acetylmuramyl-(pentapeptide) pyrophosphoryl-undecaprenol N-acetylglucosamine transferase (372 aa).

UDP-N-acetyl-alpha-D-glucosamine is bound by residues 15–17 (TGG), N126, R169, S197, and Q299.

The protein belongs to the glycosyltransferase 28 family. MurG subfamily.

The protein localises to the cell inner membrane. It carries out the reaction di-trans,octa-cis-undecaprenyl diphospho-N-acetyl-alpha-D-muramoyl-L-alanyl-D-glutamyl-meso-2,6-diaminopimeloyl-D-alanyl-D-alanine + UDP-N-acetyl-alpha-D-glucosamine = di-trans,octa-cis-undecaprenyl diphospho-[N-acetyl-alpha-D-glucosaminyl-(1-&gt;4)]-N-acetyl-alpha-D-muramoyl-L-alanyl-D-glutamyl-meso-2,6-diaminopimeloyl-D-alanyl-D-alanine + UDP + H(+). The protein operates within cell wall biogenesis; peptidoglycan biosynthesis. Cell wall formation. Catalyzes the transfer of a GlcNAc subunit on undecaprenyl-pyrophosphoryl-MurNAc-pentapeptide (lipid intermediate I) to form undecaprenyl-pyrophosphoryl-MurNAc-(pentapeptide)GlcNAc (lipid intermediate II). In Methylobacterium sp. (strain 4-46), this protein is UDP-N-acetylglucosamine--N-acetylmuramyl-(pentapeptide) pyrophosphoryl-undecaprenol N-acetylglucosamine transferase.